The sequence spans 190 residues: NADH dehydrogenase [ubiquinone] iron-sulfur protein 3 (190 aa).

This sequence belongs to the complex I 30 kDa subunit family. In terms of assembly, complex I is composed of about 45 different subunits. This is a component of the iron-sulfur (IP) fragment of the enzyme.

The protein localises to the mitochondrion inner membrane. The catalysed reaction is a ubiquinone + NADH + 5 H(+)(in) = a ubiquinol + NAD(+) + 4 H(+)(out). Its function is as follows. Core subunit of the mitochondrial membrane respiratory chain NADH dehydrogenase (Complex I) that is believed to belong to the minimal assembly required for catalysis. Complex I functions in the transfer of electrons from NADH to the respiratory chain. The immediate electron acceptor for the enzyme is believed to be ubiquinone. The sequence is that of NADH dehydrogenase [ubiquinone] iron-sulfur protein 3 (NAD9) from Oryza sativa subsp. japonica (Rice).